The primary structure comprises 855 residues: Axonemal dynein light chain domain-containing protein 1 (855 aa).

Polar residues predominate over residues 1-17 (MSLPKTPSTPLNSASTS). A disordered region spans residues 1-31 (MSLPKTPSTPLNSASTSESKKLVSVATEGTR). 3 coiled-coil regions span residues 316 to 402 (QRIL…WSSA), 451 to 480 (LQKL…RETL), and 571 to 596 (SERQ…RING).

The protein resides in the cytoplasm. Its function is as follows. May be essential for spermiogenesis and male fertility probably by regulating the manchette dynamics, spermatid head shaping and sperm flagellum assembly. The polypeptide is Axonemal dynein light chain domain-containing protein 1 (AXDND1) (Macaca fascicularis (Crab-eating macaque)).